The primary structure comprises 888 residues: Bifunctional uridylyltransferase/uridylyl-removing enzyme (888 aa).

The uridylyltransferase stretch occupies residues 1 to 338 (MIITSPLLDY…LPNYERKIEE (338 aa)). Residues 182–204 (EQAKRHAQHNNTESNLEPDIKNA) are disordered. The segment at 339–699 (INENFKLVDG…AHRQSAQDAV (361 aa)) is uridylyl-removing. One can recognise an HD domain in the interval 457 to 579 (VDAHTLLLIR…LGDMEHLDYL (123 aa)). ACT domains lie at 700–781 (QIFI…GLMQ) and 809–887 (MVEI…IVSQ).

This sequence belongs to the GlnD family. The cofactor is Mg(2+).

The enzyme catalyses [protein-PII]-L-tyrosine + UTP = [protein-PII]-uridylyl-L-tyrosine + diphosphate. The catalysed reaction is [protein-PII]-uridylyl-L-tyrosine + H2O = [protein-PII]-L-tyrosine + UMP + H(+). Its activity is regulated as follows. Uridylyltransferase (UTase) activity is inhibited by glutamine, while glutamine activates uridylyl-removing (UR) activity. Functionally, modifies, by uridylylation and deuridylylation, the PII regulatory proteins (GlnB and homologs), in response to the nitrogen status of the cell that GlnD senses through the glutamine level. Under low glutamine levels, catalyzes the conversion of the PII proteins and UTP to PII-UMP and PPi, while under higher glutamine levels, GlnD hydrolyzes PII-UMP to PII and UMP (deuridylylation). Thus, controls uridylylation state and activity of the PII proteins, and plays an important role in the regulation of nitrogen assimilation and metabolism. The polypeptide is Bifunctional uridylyltransferase/uridylyl-removing enzyme (Acinetobacter baylyi (strain ATCC 33305 / BD413 / ADP1)).